The sequence spans 165 residues: C-phycoerythrin class 2 subunit alpha (165 aa).

3 residues coordinate phycourobilin: cysteine 75, cysteine 83, and cysteine 140.

It belongs to the phycobiliprotein family. In terms of assembly, heterodimer of an alpha and a beta chain. In terms of processing, contains three covalently linked phycourobilin chromophores.

The protein resides in the cellular thylakoid membrane. In terms of biological role, light-harvesting photosynthetic bile pigment-protein from the phycobiliprotein complex. The sequence is that of C-phycoerythrin class 2 subunit alpha (mpeA) from Synechococcus sp. (strain WH8103).